The sequence spans 152 residues: Ribonuclease pancreatic (152 aa).

Positions 1 to 24 (MALDKSVILLPLLVLVLLVLGCLG) are cleaved as a signal peptide. Lys31 and Arg34 together coordinate substrate. His36 acts as the Proton acceptor in catalysis. A glycan (N-linked (GlcNAc...) asparagine) is linked at Asn46. 4 disulfide bridges follow: Cys50–Cys108, Cys64–Cys119, Cys82–Cys134, and Cys89–Cys96. Substrate contacts are provided by residues 65-69 (KPVNT), Lys90, and Arg109. N-linked (GlcNAc...) asparagine glycosylation is present at Asn112. His143 (proton donor) is an active-site residue.

Belongs to the pancreatic ribonuclease family. In terms of assembly, monomer. Interacts with and forms tight 1:1 complexes with RNH1. Dimerization of two such complexes may occur. Interaction with RNH1 inhibits this protein.

It is found in the secreted. It carries out the reaction an [RNA] containing cytidine + H2O = an [RNA]-3'-cytidine-3'-phosphate + a 5'-hydroxy-ribonucleotide-3'-[RNA].. The catalysed reaction is an [RNA] containing uridine + H2O = an [RNA]-3'-uridine-3'-phosphate + a 5'-hydroxy-ribonucleotide-3'-[RNA].. Functionally, endonuclease that catalyzes the cleavage of RNA on the 3' side of pyrimidine nucleotides. Acts on single-stranded and double-stranded RNA. This Miopithecus talapoin (Angolan talapoin) protein is Ribonuclease pancreatic (RNASE1).